The chain runs to 71 residues: Large ribosomal subunit protein bL31 (71 aa).

4 residues coordinate Zn(2+): C16, C18, C37, and C40.

Belongs to the bacterial ribosomal protein bL31 family. Type A subfamily. As to quaternary structure, part of the 50S ribosomal subunit. It depends on Zn(2+) as a cofactor.

In terms of biological role, binds the 23S rRNA. This Pseudomonas aeruginosa (strain LESB58) protein is Large ribosomal subunit protein bL31.